We begin with the raw amino-acid sequence, 491 residues long: Katanin p60 ATPase-containing subunit A1 (491 aa).

The tract at residues 1–29 (MSLLMISENVKLAREYALLGNYDSAMVYY) is interaction with KATNB1. The tract at residues 1–75 (MSLLMISENV…VKDIMKTLES (75 aa)) is interaction with dynein and NDEL1. The segment at 1 to 185 (MSLLMISENV…EPETNKFDST (185 aa)) is interaction with microtubules. Ser-42 and Ser-109 each carry phosphoserine; by DYRK2. The interval 87–185 (QHDLPASEGE…EPETNKFDST (99 aa)) is disordered. Polar residues predominate over residues 117-144 (SSQYSDPKSHGNRPSTTVRVHRSSAQNV). Phosphothreonine; by DYRK2 is present on Thr-133. A compositionally biased stretch (basic and acidic residues) spans 145–169 (HNDRGKAVRCREKKEQNKGREEKNK). Ser-170 is modified (phosphoserine). An ATP-binding site is contributed by 249-256 (GPPGTGKT).

This sequence belongs to the AAA ATPase family. Katanin p60 subunit A1 subfamily. Can homooligomerize into hexameric rings, which may be promoted by interaction with microtubules. Interacts with KATNB1, which may serve as a targeting subunit. Interacts with ASPM; the katanin complex formation KATNA1:KATNB1 is required for the association of ASPM. Interacts with dynein and NDEL1. Associates with the E3 ligase complex containing DYRK2, EDD/UBR5, DDB1 and DCAF1 proteins (EDVP complex). Interacts with KLHL42 (via the kelch domains). Interacts with CUL3; the interaction is enhanced by KLHL42. Interacts with KATNB1 and KATNBL1. Interacts with CAMSAP2 and CAMSAP3; leading to regulate the length of CAMSAP-decorated microtubule stretches. Phosphorylation by DYRK2 triggers ubiquitination and subsequent degradation. Post-translationally, ubiquitinated by the BCR(KLHL42) E3 ubiquitin ligase complex, leading to its proteasomal degradation. Ubiquitinated by the EDVP E3 ligase complex and subsequently targeted for proteasomal degradation.

The protein localises to the cytoplasm. It is found in the midbody. Its subcellular location is the cytoskeleton. The protein resides in the microtubule organizing center. It localises to the centrosome. The protein localises to the spindle pole. It is found in the spindle. The enzyme catalyses n ATP + n H2O + a microtubule = n ADP + n phosphate + (n+1) alpha/beta tubulin heterodimers.. With respect to regulation, ATPase activity is stimulated by microtubules, which promote homooligomerization. ATP-dependent microtubule severing is stimulated by interaction with KATNB1. Its function is as follows. Catalytic subunit of a complex which severs microtubules in an ATP-dependent manner. Microtubule severing may promote rapid reorganization of cellular microtubule arrays and the release of microtubules from the centrosome following nucleation. Microtubule release from the mitotic spindle poles may allow depolymerization of the microtubule end proximal to the spindle pole, leading to poleward microtubule flux and poleward motion of chromosome. Microtubule release within the cell body of neurons may be required for their transport into neuronal processes by microtubule-dependent motor proteins. This transport is required for axonal growth. This Homo sapiens (Human) protein is Katanin p60 ATPase-containing subunit A1.